A 322-amino-acid chain; its full sequence is Lactamase-like protein nscB (322 aa).

Zn(2+) contacts are provided by His-97, His-99, Asp-101, and His-102. Asp-101 serves as the catalytic Proton donor/acceptor.

This sequence belongs to the metallo-beta-lactamase superfamily. Zn(2+) serves as cofactor.

It participates in secondary metabolite biosynthesis. Its function is as follows. Lactamase-like protein; part of the gene cluster that mediates the biosynthesis of neosartoricin B, a prenylated anthracenone that probably exhibits T-cell antiproliferative activity, suggestive of a physiological role as an immunosuppressive agent. The non-reducing polyketide synthase nscA probably synthesizes and cyclizes the decaketide backbone. The hydrolase nscB then mediates the product release through hydrolysis followed by spontaneous decarboxylation. The prenyltransferase nscD catalyzes the addition of the dimethylallyl group to the aromatic C5. The FAD-dependent monooxygenase nscC is then responsible for the stereospecific hydroxylation at C2. Neosartoricin B can be converted into two additional compounds neosartoricins C and D. Neosartoricin C is a spirocyclic compound that is cyclized through the attack of C3 hydroxyl on C14, followed by dehydration. On the other hand, neosartoricin D is a further cyclized compound in which attack of C2 on C14 in neosartoricin C results in the formation of the acetal-containing dioxabicyclo-octanone ring. Both of these compounds are novel and possibly represent related metabolites of the gene cluster. This Trichophyton rubrum (strain ATCC MYA-4607 / CBS 118892) (Athlete's foot fungus) protein is Lactamase-like protein nscB.